The chain runs to 130 residues: Small ribosomal subunit protein uS11 (130 aa).

It belongs to the universal ribosomal protein uS11 family. Part of the 30S ribosomal subunit. Interacts with proteins S7 and S18. Binds to IF-3.

Functionally, located on the platform of the 30S subunit, it bridges several disparate RNA helices of the 16S rRNA. Forms part of the Shine-Dalgarno cleft in the 70S ribosome. The sequence is that of Small ribosomal subunit protein uS11 from Microcystis aeruginosa (strain NIES-843 / IAM M-2473).